The chain runs to 450 residues: Tubulin beta chain (450 aa).

Glu69, Ser138, Gly142, Thr143, Gly144, Asn204, and Asn226 together coordinate GTP. Mg(2+) is bound at residue Glu69. The segment at 427–450 is disordered; it reads DATIDQEFEDEEEVEEQNDDSDEQ. Acidic residues predominate over residues 430-450; it reads IDQEFEDEEEVEEQNDDSDEQ.

It belongs to the tubulin family. As to quaternary structure, dimer of alpha and beta chains. A typical microtubule is a hollow water-filled tube with an outer diameter of 25 nm and an inner diameter of 15 nM. Alpha-beta heterodimers associate head-to-tail to form protofilaments running lengthwise along the microtubule wall with the beta-tubulin subunit facing the microtubule plus end conferring a structural polarity. Microtubules usually have 13 protofilaments but different protofilament numbers can be found in some organisms and specialized cells. Mg(2+) is required as a cofactor.

It localises to the cytoplasm. Its subcellular location is the cytoskeleton. Tubulin is the major constituent of microtubules, a cylinder consisting of laterally associated linear protofilaments composed of alpha- and beta-tubulin heterodimers. Microtubules grow by the addition of GTP-tubulin dimers to the microtubule end, where a stabilizing cap forms. Below the cap, tubulin dimers are in GDP-bound state, owing to GTPase activity of alpha-tubulin. This chain is Tubulin beta chain, found in Bombyx mori (Silk moth).